Here is a 360-residue protein sequence, read N- to C-terminus: G-protein coupled receptor 15 (360 aa).

Residues 1–33 (MDPEETSVYLDYYYATSPNSDIRETHSHVPYTS) lie on the Extracellular side of the membrane. A helical transmembrane segment spans residues 34–54 (VFLPVFYTAVFLTGVLGNLVL). Residues 55 to 69 (MGALHFKPGSRRLID) lie on the Cytoplasmic side of the membrane. A helical membrane pass occupies residues 70–90 (IFIINLAASDFIFLVTLPLWV). At 91–120 (DKEASLGLWRTGSFLCKGSSYMISVNMHCS) the chain is on the extracellular side. Residues 121-141 (VLLLTCMSVDRYLAIVWPVVS) traverse the membrane as a helical segment. Topologically, residues 142–149 (RKFRRTDC) are cytoplasmic. Residues 150–170 (AYVVCASIWFISCLLGLPTLL) traverse the membrane as a helical segment. The Extracellular segment spans residues 171-192 (SRELTLIDDKPYCAEKKATPIK). A helical transmembrane segment spans residues 193–213 (LIWSLVALIFTFFVPLLSIVT). Over 214 to 239 (CYCCIARKLCAHYQQSGKHNKKLKKS) the chain is Cytoplasmic. The chain crosses the membrane as a helical span at residues 240–260 (IKIIFIVVAAFLVSWLPFNTF). At 261–284 (KFLAIVSGLRQEHYLPSAILQLGM) the chain is on the extracellular side. The helical transmembrane segment at 285–305 (EVSGPLAFANSCVNPFIYYIF) threads the bilayer. The Cytoplasmic segment spans residues 306–360 (DSYIRRAIVHCLCPCLKNYDFGSSTETSDSHLTKALSTFIHAEDFARRRKRSVSL). Ser-359 carries the post-translational modification Phosphoserine.

This sequence belongs to the G-protein coupled receptor 1 family. In terms of assembly, interacts with adapter YWHAE; this interaction promotes ER-to-Golgi transport of GPR15. Interacts with GNAI1; this interaction initiates the signaling pathway. Post-translationally, phosphorylation is necessary for YWHAE binding and efficient surface expression. In terms of processing, O-glycosylated. Sialylated O-glycans in the N-terminal tail inhibits binding of GPR15LG. Sulfation is required for efficient binding of GPR15LG. In terms of tissue distribution, highly expressed in lymphoid tissues, including macrophages and peripheral blood mononuclear cells.

The protein resides in the cell membrane. G protein-coupled receptor that plays an important role in immune homeostasis. Acts via its natural ligand GPR15LG, a chemokine-like polypeptide strongly expressed in gastrointestinal tissues. GPR15-GPR15LG signaling axis regulates intestinal homeostasis and inflammation through the migration of immune cells. Controls thereby the specific homing of T-cells, particularly FOXP3+ regulatory T-cells (Tregs), to the large intestine lamina propria. Also required for skin localization of thymus-derived dendritic epidermal T-cells. Plays an important role in mediating cytoprotective function as well as angiogenesis of thrombomodulin. Mechanistically, preferentially signals through the Gi/o pathway to inhibit adenylate cyclase activity and activate a phosphatidylinositol-calcium second messenger system that regulates the release of Ca(2+) ions from intracellular stores. In terms of biological role, (Microbial infection) Acts as an alternative coreceptor with CD4 for HIV-1 infection. This chain is G-protein coupled receptor 15 (GPR15), found in Homo sapiens (Human).